Consider the following 993-residue polypeptide: Synaptonemal complex protein 1 (993 aa).

The short motif at 98-108 is the Mediates head to head self-assembly of N-terminal ends element; it reads PMSRLYSKLYK. The short motif at 114-117 is the Nuclear localization signal element; it reads KKWK. 2 coiled-coil regions span residues 117–172 and 215–688; these read KVSI…LIKE and IEKM…EIEN. The interaction with SYCE3 stretch occupies residues 203-359; that stretch reads ETRQVYVDLN…SQLTEVKEAQ (157 aa). A required for pH-induced assembly of C-terminal ends into antiparallel tetramers region spans residues 694–788; the sequence is GKLLGEVEKA…VSLKKQLEIE (95 aa). The Nuclear localization signal signature appears at 697–700; sequence LGEV. A coiled-coil region spans residues 764-808; sequence KIALETELSNIRNELVSLKKQLEIEKEEKEKLKMAKENTAILKDK. The interval 801–993 is DNA-binding; that stretch reads NTAILKDKKD…RLKEAEKLFS (193 aa). Position 820 is a phosphoserine (Ser820). Residues 824–861 form a disordered region; sequence TSWKFDSKTTPSQNISRLSSSMDSGKSKDNRDNLRASA. Residues 831–847 are compositionally biased toward polar residues; the sequence is KTTPSQNISRLSSSMDS. The span at 848 to 857 shows a compositional bias: basic and acidic residues; the sequence is GKSKDNRDNL. The Nuclear localization signal signature appears at 898 to 901; it reads KKRK.

Structural component of synaptonemal complexes. Homotetramer that consists of an N-terminal four-helical bundle that bifurcates into two elongated C-terminal dimeric coiled coils. This tetrameric building block potentially self-assembles into a supramolecular zipper-like lattice to mediate meiotic chromosome synapsis. Self-assembly is likely initiated by local proton density at chromosome axis, which is predicted to trigger antiparallel back to back assembly of adjacent C-terminal ends into tetrameric structures that anchor to chromosomal DNA. Then the N-terminal ends are predicted to undergo cooperative antiparallel head to head assembly at the midline of synaptonemal complexes central element to form a zipper-like lattice between properly aligned homologous chromosomes. The nascent synapsis generated by SYCP1 is stabilized through interaction with central element proteins SYCE1 and SYCE2. Interacts (via tetrameric core) with SYCE3; the interaction remodels SYCP1 homotetramers to 2:1 heterotrimers with SYCE3. SYCP1/SYCE3 heterotrimers form lattice assemblies as part of the mature synaptonemal complex via both lateral and head-to-head interactions. Forms a complex with EWSR1, PRDM9, SYCP3 and REC8; complex formation is dependent of phosphorylated form of REC8 and requires PRDM9 bound to hotspot DNA; EWSR1 joins PRDM9 with the chromosomal axis through REC8. Interacts with SPO16. In terms of tissue distribution, detected in testis. Detected in spermatocytes (at protein level).

Its subcellular location is the nucleus. The protein resides in the chromosome. It is found in the centromere. Major component of the transverse filaments of synaptonemal complexes, formed between homologous chromosomes during meiotic prophase. Required for normal assembly of the central element of the synaptonemal complexes. Required for normal centromere pairing during meiosis. Required for normal meiotic chromosome synapsis during oocyte and spermatocyte development and for normal male and female fertility. The polypeptide is Synaptonemal complex protein 1 (Mus musculus (Mouse)).